Reading from the N-terminus, the 112-residue chain is Phosphoribosyl-ATP pyrophosphatase (112 aa).

Belongs to the PRA-PH family.

It localises to the cytoplasm. It carries out the reaction 1-(5-phospho-beta-D-ribosyl)-ATP + H2O = 1-(5-phospho-beta-D-ribosyl)-5'-AMP + diphosphate + H(+). It participates in amino-acid biosynthesis; L-histidine biosynthesis; L-histidine from 5-phospho-alpha-D-ribose 1-diphosphate: step 2/9. The protein is Phosphoribosyl-ATP pyrophosphatase of Chromohalobacter salexigens (strain ATCC BAA-138 / DSM 3043 / CIP 106854 / NCIMB 13768 / 1H11).